A 114-amino-acid polypeptide reads, in one-letter code: Large ribosomal subunit protein uL22 (114 aa).

It belongs to the universal ribosomal protein uL22 family. In terms of assembly, part of the 50S ribosomal subunit.

This protein binds specifically to 23S rRNA; its binding is stimulated by other ribosomal proteins, e.g. L4, L17, and L20. It is important during the early stages of 50S assembly. It makes multiple contacts with different domains of the 23S rRNA in the assembled 50S subunit and ribosome. Its function is as follows. The globular domain of the protein is located near the polypeptide exit tunnel on the outside of the subunit, while an extended beta-hairpin is found that lines the wall of the exit tunnel in the center of the 70S ribosome. This is Large ribosomal subunit protein uL22 from Alcanivorax borkumensis (strain ATCC 700651 / DSM 11573 / NCIMB 13689 / SK2).